A 470-amino-acid chain; its full sequence is Poly(A) polymerase catalytic subunit (470 aa).

Active-site residues include aspartate 192 and aspartate 194.

It belongs to the poxviridae poly(A) polymerase catalytic subunit family. Heterodimer of a large (catalytic) subunit and a small (regulatory) subunit.

It catalyses the reaction RNA(n) + ATP = RNA(n)-3'-adenine ribonucleotide + diphosphate. Its function is as follows. Polymerase that creates the 3'-poly(A) tail of mRNA's. In Odocoileus hemionus (Mule deer), this protein is Poly(A) polymerase catalytic subunit (PAPL).